Consider the following 371-residue polypeptide: MAAEQRRSTIFDIVSKCIVQSVLRDISINSEYIESKAKQLCYCPASKKESVINGIYNCCESNIEIMDKEQLLKILDNLRCHSAHVCNATDFWRLYNSLKRFTHTTAFFNTCKPTILATLNTLITLILSNKLLYAAEMVEYLENQLDSSNKSMSQELAELLEMKYALINLVQYRILPMIIGEPIIVAGFSGKEPISDYSAEVERLMELPVKTDIVNTTYDFLARKGIDTSNNIAEYIAGLKIEEIEKVEKYLPEVISTIANSNIIKNKKSIFPANINDKQIMECSRMLDTSEKYSKGYKTDGAVTSPLTGNNTITTFIPISASDMQKFTILEYLYIMRVMANNVKKKNEGKNNGGVVMHINSPFKVINLPKC.

The protein belongs to the chordopoxvirinae G7 family. In terms of assembly, part of a complex composed of A30, G7, F10 kinase, A15, D2, D3, and J1. Post-translationally, phosphorylated on serines by F10 kinase, phosphorylation state is regulated by H1 phosphatase. Undergoes proteolytic processing during morphogenesis, probably required for the transformation of immature virions (IV) into mature virions (MV).

It localises to the host cytoplasm. The protein resides in the virion. Late protein which is a part of a large complex required for early virion morphogenesis. This complex participates in the formation of virosomes and the incorporation of virosomal contents into nascent immature virions. The protein is Assembly protein G7 of Homo sapiens (Human).